Reading from the N-terminus, the 120-residue chain is ATP-dependent Clp protease adapter protein ClpS (120 aa).

It belongs to the ClpS family. As to quaternary structure, binds to the N-terminal domain of the chaperone ClpA.

Its function is as follows. Involved in the modulation of the specificity of the ClpAP-mediated ATP-dependent protein degradation. The sequence is that of ATP-dependent Clp protease adapter protein ClpS from Pseudomonas fluorescens (strain ATCC BAA-477 / NRRL B-23932 / Pf-5).